Consider the following 429-residue polypeptide: Actin-like protein 6A (429 aa).

Ser2 carries the N-acetylserine modification. Residue Lys62 forms a Glycyl lysine isopeptide (Lys-Gly) (interchain with G-Cter in SUMO2) linkage. Phosphoserine is present on residues Ser86 and Ser233.

This sequence belongs to the actin family. As to quaternary structure, component of numerous complexes with chromatin remodeling and histone acetyltransferase activity. Component of the NuA4 histone acetyltransferase complex which contains the catalytic subunit KAT5/TIP60 and the subunits EP400, TRRAP/PAF400, BRD8/SMAP, EPC1, DMAP1/DNMAP1, RUVBL1/TIP49, RUVBL2, ING3, actin, ACTL6A/BAF53A, MORF4L1/MRG15, MORF4L2/MRGX, MRGBP, YEATS4/GAS41, VPS72/YL1 and MEAF6. The NuA4 complex interacts with MYC and the adenovirus E1A protein. Component of a NuA4-related complex which contains EP400, TRRAP/PAF400, SRCAP, BRD8/SMAP, EPC1, DMAP1/DNMAP1, RUVBL1/TIP49, RUVBL2, actin, ACTL6A/BAF53A, VPS72 and YEATS4/GAS41. Component of the multiprotein chromatin-remodeling complexes SWI/SNF: SWI/SNF-A (BAF), SWI/SNF-B (PBAF) and related complexes. The canonical complex contains a catalytic subunit (either SMARCA4/BRG1/BAF190A or SMARCA2/BRM/BAF190B) and at least SMARCE1, ACTL6A/BAF53, SMARCC1/BAF155, SMARCC2/BAF170, and SMARCB1/SNF5/BAF47. Other subunits specific to each of the complexes may also be present permitting several possible combinations developmentally and tissue specific. Component of the BAF complex, which includes at least actin (ACTB), ARID1A/BAF250A, ARID1B/BAF250B, SMARCA2/BRM, SMARCA4/BRG1/BAF190A, ACTL6A/BAF53, ACTL6B/BAF53B, SMARCE1/BAF57, SMARCC1/BAF155, SMARCC2/BAF170, SMARCB1/SNF5/INI1, and one or more SMARCD1/BAF60A, SMARCD2/BAF60B, or SMARCD3/BAF60C. In muscle cells, the BAF complex also contains DPF3. Component of the BAF53 complex, at least composed of ACTL6A/BAF53A, RUVBL1/TIP49, SMARCA2/BRM/BAF190B and TRRAP/PAF400, and which may also include a HAT activity related to, but distinct from, that of KAT5. Component of neural progenitors-specific chromatin remodeling complex (npBAF complex) composed of at least, ARID1A/BAF250A or ARID1B/BAF250B, SMARCD1/BAF60A, SMARCD3/BAF60C, SMARCA2/BRM/BAF190B, SMARCA4/BRG1/BAF190A, SMARCB1/BAF47, SMARCC1/BAF155, SMARCE1/BAF57, SMARCC2/BAF170, PHF10/BAF45A, ACTL6A/BAF53A and actin. Component of SWI/SNF (GBAF) subcomplex, which includes at least BICRA or BICRAL (mutually exclusive), BRD9, SS18, SMARCA2/BRM, SMARCA4/BRG1/BAF190A, ACTL6A/BAF53, SMARCC1/BAF155, and SMARCD1/BAF60A. May be a component of the SWI/SNF-B (PBAF) chromatin remodeling complex, at least composed of SMARCA4/BRG1, SMARCB1/BAF47/SNF5, ACTL6A/BAF53A or ACTL6B/BAF53B, SMARCE1/BAF57, SMARCD1/BAF60A, SMARCD2/BAF60B, perhaps SMARCD3/BAF60C, SMARCC1/BAF155, SMARCC2/BAF170, PBRM1/BAF180, ARID2/BAF200 and actin. Interacts with SMARCA4/BRG1/BAF190A. Interacts with PHF10/BAF45A. Component of the chromatin remodeling INO80 complex; specifically part of a complex module associated with the DBINO domain of INO80. Interacts with DPF2. Widely expressed. Expressed selectively in neural stem and progenitor cells (at protein level).

It localises to the nucleus. Functionally, involved in transcriptional activation and repression of select genes by chromatin remodeling (alteration of DNA-nucleosome topology). Component of SWI/SNF chromatin remodeling complexes that carry out key enzymatic activities, changing chromatin structure by altering DNA-histone contacts within a nucleosome in an ATP-dependent manner. Required for maximal ATPase activity of SMARCA4/BRG1/BAF190A and for association of the SMARCA4/BRG1/BAF190A containing remodeling complex BAF with chromatin/nuclear matrix. Belongs to the neural progenitors-specific chromatin remodeling complex (npBAF complex) and is required for the proliferation of neural progenitors. During neural development a switch from a stem/progenitor to a postmitotic chromatin remodeling mechanism occurs as neurons exit the cell cycle and become committed to their adult state. The transition from proliferating neural stem/progenitor cells to postmitotic neurons requires a switch in subunit composition of the npBAF and nBAF complexes. As neural progenitors exit mitosis and differentiate into neurons, npBAF complexes which contain ACTL6A/BAF53A and PHF10/BAF45A, are exchanged for homologous alternative ACTL6B/BAF53B and DPF1/BAF45B or DPF3/BAF45C subunits in neuron-specific complexes (nBAF). The npBAF complex is essential for the self-renewal/proliferative capacity of the multipotent neural stem cells. The nBAF complex along with CREST plays a role regulating the activity of genes essential for dendrite growth. Component of the NuA4 histone acetyltransferase (HAT) complex which is involved in transcriptional activation of select genes principally by acetylation of nucleosomal histones H4 and H2A. This modification may both alter nucleosome - DNA interactions and promote interaction of the modified histones with other proteins which positively regulate transcription. This complex may be required for the activation of transcriptional programs associated with oncogene and proto-oncogene mediated growth induction, tumor suppressor mediated growth arrest and replicative senescence, apoptosis, and DNA repair. NuA4 may also play a direct role in DNA repair when recruited to sites of DNA damage. Putative core component of the chromatin remodeling INO80 complex which is involved in transcriptional regulation, DNA replication and probably DNA repair. In Mus musculus (Mouse), this protein is Actin-like protein 6A (Actl6a).